A 570-amino-acid polypeptide reads, in one-letter code: Nucleoprotein (570 aa).

The interval 54-241 (MRKEKRDDSD…IEPKKSAINI (188 aa)) is binding site for the cap structure m7GTP. Mn(2+)-binding residues include aspartate 390 and glutamate 392. The Zn(2+) site is built by glutamate 400, cysteine 507, histidine 510, and cysteine 530. A Mn(2+)-binding site is contributed by aspartate 534.

Belongs to the arenaviridae nucleocapsid protein family. Homomultimerizes to form the nucleocapsid. Binds to viral genomic RNA. Interacts with glycoprotein G2. Interacts with protein Z; this interaction probably directs the encapsidated genome to budding sites. Interacts with protein L; this interaction does not interfere with Z-L interaction. Interacts with host IKBKE (via Protein kinase domain); the interaction inhibits IKBKE kinase activity.

The protein localises to the virion. The protein resides in the host cytoplasm. In terms of biological role, encapsidates the genome, protecting it from nucleases. The encapsidated genomic RNA is termed the nucleocapsid (NC). Serves as template for viral transcription and replication. The increased presence of protein N in host cell does not seem to trigger the switch from transcription to replication as observed in other negative strain RNA viruses. Through the interaction with host IKBKE, strongly inhibits the phosphorylation and nuclear translocation of host IRF3, a protein involved in interferon activation pathway, leading to the inhibition of interferon-beta and IRF3-dependent promoters activation. Also encodes a functional 3'-5' exoribonuclease that degrades preferentially dsRNA substrates and thereby participates in the suppression of interferon induction. In Mopeia virus (MOPV), this protein is Nucleoprotein.